Here is a 229-residue protein sequence, read N- to C-terminus: MAKKKAFTPLLYLASIVFLPWWISLSFNKSLKSWITNWWDTRQSETFLNDIQEKSILEQFIEVEELFLLDEMIKEYPETHLQKLRIGIQKETIQLIKLHNEDHIHTILHFSTNLICFVILSGYSILGNEELLILNSWVQEFLYNLSDTIKAFSILLLTDLCIGFHSPHGWELMIGSIYKDFGFAHNDQIISGLVSTFPVILDTIFKYWIFRYLNRVSPSLVVIYHSMND.

The next 4 helical transmembrane spans lie at 7-27 (FTPL…SLSF), 114-134 (LICF…LLIL), 154-174 (ILLL…ELMI), and 189-209 (IISG…KYWI).

It belongs to the CemA family.

It localises to the plastid. Its subcellular location is the chloroplast inner membrane. It carries out the reaction K(+)(in) + H(+)(out) = K(+)(out) + H(+)(in). Its function is as follows. Contributes to K(+)/H(+) antiport activity by supporting proton efflux to control proton extrusion and homeostasis in chloroplasts in a light-dependent manner to modulate photosynthesis. Prevents excessive induction of non-photochemical quenching (NPQ) under continuous-light conditions. Indirectly promotes efficient inorganic carbon uptake into chloroplasts. This chain is Potassium/proton antiporter CemA, found in Gossypium hirsutum (Upland cotton).